The sequence spans 375 residues: Probable disease resistance protein At1g52660 (375 aa).

The region spanning E158–G372 is the NB-ARC domain. An ATP-binding site is contributed by G167 to T174.

Functionally, possible disease resistance protein. The sequence is that of Probable disease resistance protein At1g52660 from Arabidopsis thaliana (Mouse-ear cress).